A 159-amino-acid chain; its full sequence is Ribosomal RNA large subunit methyltransferase H (159 aa).

S-adenosyl-L-methionine contacts are provided by residues Leu76, Gly108, and 127–132 (FSKMTF).

This sequence belongs to the RNA methyltransferase RlmH family. In terms of assembly, homodimer.

Its subcellular location is the cytoplasm. It catalyses the reaction pseudouridine(1915) in 23S rRNA + S-adenosyl-L-methionine = N(3)-methylpseudouridine(1915) in 23S rRNA + S-adenosyl-L-homocysteine + H(+). Functionally, specifically methylates the pseudouridine at position 1915 (m3Psi1915) in 23S rRNA. The protein is Ribosomal RNA large subunit methyltransferase H of Geobacillus sp. (strain WCH70).